The chain runs to 380 residues: Queuine tRNA-ribosyltransferase (380 aa).

The active-site Proton acceptor is the aspartate 95. Substrate is bound by residues 95–99 (DSGGF), aspartate 149, glutamine 192, and glycine 219. The tract at residues 250–256 (GVGSPDS) is RNA binding. Catalysis depends on aspartate 269, which acts as the Nucleophile. The RNA binding; important for wobble base 34 recognition stretch occupies residues 274-278 (TRIGR). 4 residues coordinate Zn(2+): cysteine 307, cysteine 309, cysteine 312, and histidine 338.

This sequence belongs to the queuine tRNA-ribosyltransferase family. As to quaternary structure, homodimer. Within each dimer, one monomer is responsible for RNA recognition and catalysis, while the other monomer binds to the replacement base PreQ1. The cofactor is Zn(2+).

The enzyme catalyses 7-aminomethyl-7-carbaguanine + guanosine(34) in tRNA = 7-aminomethyl-7-carbaguanosine(34) in tRNA + guanine. Its pathway is tRNA modification; tRNA-queuosine biosynthesis. Functionally, catalyzes the base-exchange of a guanine (G) residue with the queuine precursor 7-aminomethyl-7-deazaguanine (PreQ1) at position 34 (anticodon wobble position) in tRNAs with GU(N) anticodons (tRNA-Asp, -Asn, -His and -Tyr). Catalysis occurs through a double-displacement mechanism. The nucleophile active site attacks the C1' of nucleotide 34 to detach the guanine base from the RNA, forming a covalent enzyme-RNA intermediate. The proton acceptor active site deprotonates the incoming PreQ1, allowing a nucleophilic attack on the C1' of the ribose to form the product. After dissociation, two additional enzymatic reactions on the tRNA convert PreQ1 to queuine (Q), resulting in the hypermodified nucleoside queuosine (7-(((4,5-cis-dihydroxy-2-cyclopenten-1-yl)amino)methyl)-7-deazaguanosine). This is Queuine tRNA-ribosyltransferase from Geobacillus thermodenitrificans (strain NG80-2).